Consider the following 240-residue polypeptide: UDP-2,3-diacylglucosamine hydrolase (240 aa).

Mn(2+) is bound by residues Asp7, His9, Asp40, Asn78, and His113. Substrate is bound at residue 78–79 (NR). Substrate contacts are provided by Asp121, Ser159, Thr163, Lys166, and His194. Mn(2+) contacts are provided by His194 and His196.

It belongs to the LpxH family. It depends on Mn(2+) as a cofactor.

The protein localises to the cell inner membrane. The enzyme catalyses UDP-2-N,3-O-bis[(3R)-3-hydroxytetradecanoyl]-alpha-D-glucosamine + H2O = 2-N,3-O-bis[(3R)-3-hydroxytetradecanoyl]-alpha-D-glucosaminyl 1-phosphate + UMP + 2 H(+). Its pathway is glycolipid biosynthesis; lipid IV(A) biosynthesis; lipid IV(A) from (3R)-3-hydroxytetradecanoyl-[acyl-carrier-protein] and UDP-N-acetyl-alpha-D-glucosamine: step 4/6. Hydrolyzes the pyrophosphate bond of UDP-2,3-diacylglucosamine to yield 2,3-diacylglucosamine 1-phosphate (lipid X) and UMP by catalyzing the attack of water at the alpha-P atom. Involved in the biosynthesis of lipid A, a phosphorylated glycolipid that anchors the lipopolysaccharide to the outer membrane of the cell. The protein is UDP-2,3-diacylglucosamine hydrolase of Pseudomonas entomophila (strain L48).